Consider the following 876-residue polypeptide: uncharacterized protein (876 aa).

A compositionally biased stretch (basic and acidic residues) spans 37 to 48; sequence DEDKSNNDDRRS. Disordered stretches follow at residues 37–67, 112–155, 226–254, and 330–353; these read DEDK…KGSN, DESG…RNIK, KKKS…TKSQ, and MMMD…SRSI. A phosphoserine mark is found at S48 and S51. The span at 49-58 shows a compositional bias: low complexity; that stretch reads LASILDSSSS. Over residues 115-131 the composition is skewed to polar residues; sequence GFTSDNNADYFSGNSYS. Residues S360, S510, S552, and S577 each carry the phosphoserine modification. The tract at residues 490–513 is disordered; sequence PEVTKQKNTSGPKPGFSHSKSADA. Disordered stretches follow at residues 661–728 and 750–876; these read ITGG…RSPQ and RHSL…FGRL. A compositionally biased stretch (basic residues) spans 689–699; the sequence is SKSKSRSSSKS. The segment covering 717-726 has biased composition (low complexity); it reads SSASASRSRS. S775 is modified (phosphoserine). 2 stretches are compositionally biased toward low complexity: residues 794 to 808 and 842 to 854; these read NKDS…SSSL and FSFF…SPSS.

This is an uncharacterized protein from Saccharomyces cerevisiae (strain ATCC 204508 / S288c) (Baker's yeast).